We begin with the raw amino-acid sequence, 438 residues long: GTPase Der (438 aa).

EngA-type G domains lie at Pro3–Glu168 and Ile179–Arg354. GTP contacts are provided by residues Gly9–Ser16, Asp56–Tyr60, Asn120–Asp123, Gly185–Ser192, Asp232–Leu236, and Asn297–Asp300. One can recognise a KH-like domain in the interval Gln355–Lys438.

The protein belongs to the TRAFAC class TrmE-Era-EngA-EngB-Septin-like GTPase superfamily. EngA (Der) GTPase family. As to quaternary structure, associates with the 50S ribosomal subunit.

In terms of biological role, GTPase that plays an essential role in the late steps of ribosome biogenesis. This Chlorobaculum parvum (strain DSM 263 / NCIMB 8327) (Chlorobium vibrioforme subsp. thiosulfatophilum) protein is GTPase Der.